Consider the following 444-residue polypeptide: Transmembrane protein with metallophosphoesterase domain (444 aa).

5 helical membrane passes run 7 to 27 (LSLG…MIVS), 43 to 63 (LFRL…SIYI), 87 to 107 (MVVA…IFLV), 114 to 134 (FSLV…FLCV), and 162 to 182 (LALR…VGLL). Aspartate 214, histidine 216, aspartate 246, asparagine 277, histidine 382, and histidine 384 together coordinate a divalent metal cation.

This sequence belongs to the metallophosphoesterase superfamily. LOC643853 family. A divalent metal cation is required as a cofactor.

Its subcellular location is the membrane. In Bos taurus (Bovine), this protein is Transmembrane protein with metallophosphoesterase domain (TMPPE).